We begin with the raw amino-acid sequence, 120 residues long: Large ribosomal subunit protein uL18 (120 aa).

Belongs to the universal ribosomal protein uL18 family. As to quaternary structure, part of the 50S ribosomal subunit; part of the 5S rRNA/L5/L18/L25 subcomplex. Contacts the 5S and 23S rRNAs.

In terms of biological role, this is one of the proteins that bind and probably mediate the attachment of the 5S RNA into the large ribosomal subunit, where it forms part of the central protuberance. This chain is Large ribosomal subunit protein uL18, found in Exiguobacterium sp. (strain ATCC BAA-1283 / AT1b).